Here is a 580-residue protein sequence, read N- to C-terminus: MSEIRKPLLGFVHKLQDANASGSSGKTHCPTCLRLFKVPRLLPCLHTVCTTCLEKLDPFSVVDIRGGDSDTSSEGSVFQDPELCSLQPQIGILCPVCDAQVDLPLGGVKALTVDHLAMNDVLLENLRGEGQGLVCDLCSDREVEKRCQTCKANLCHFCCQAHRRQKKTTYHTMVDLKDLKGYSQVGKPILCPSHPAEELRLFCELCDRPVCRDCVVGEHREHPYDFTSNVIHKHGDSVRELLRDTQPHVEALEDALAQIKSVNNALQERVEAVAADVRTFSEGYIKAIEEHRDKLLQQLDDIRIQRETALQLQKAQLEQLLADMRTGVEFTEHLLTSGSDLEILITKGVVVERLRKLNKVEYSARPGVNHKICFSPQEKAGQCQGYEVYGAINTQEVDPAQCVLQGEDLHRAREKQTASFTLFCKDASGQSMGRGGDNVHVEVVPKDKKDSPIRTVVQDNKDGSYRVSYTPKEPGIYTVWVCIREQHVQGSPFNVTVRRKHRPHPGVFHCCTFCSSGGQKAARCACGGTMPGGYLGCGHGHKGHPGRPHWSCCGKFIEKSECSFTSGQGAPRSLLRTVAL.

The segment at 29-98 adopts an RING-type zinc-finger fold; the sequence is CPTCLRLFKV…QIGILCPVCD (70 aa). B box-type zinc fingers lie at residues 130 to 176 and 186 to 227; these read GQGL…MVDL and GKPI…YDFT. Zn(2+) contacts are provided by C135, C138, C158, H162, C191, H194, C214, and H219. Residues 249–329 are a coiled coil; the sequence is VEALEDALAQ…LLADMRTGVE (81 aa). Residues 394-497 form a Filamin repeat; it reads TQEVDPAQCV…VQGSPFNVTV (104 aa).

It belongs to the TRIM/RBCC family.

It localises to the cytoplasm. Its subcellular location is the nucleus. The catalysed reaction is S-ubiquitinyl-[E2 ubiquitin-conjugating enzyme]-L-cysteine + [acceptor protein]-L-lysine = [E2 ubiquitin-conjugating enzyme]-L-cysteine + N(6)-ubiquitinyl-[acceptor protein]-L-lysine.. Functionally, E3 ubiquitin-protein ligase that plays a role in the regulation of inflammatory response. Mechanistically, mediates the 'Lys-48'-linked polyubiquitination of TAB2, a regulatory protein of the kinase TAK1, leading to its degradation via the proteasomal pathway and inhibition of the TLR-mediated inflammatory immune response. May act as a transcriptional repressor in mitogen-activated protein kinase signaling pathway. The chain is E3 ubiquitin-protein ligase TRIM45 (Trim45) from Mus musculus (Mouse).